Reading from the N-terminus, the 164-residue chain is Peptide deformylase (164 aa).

The Fe cation site is built by cysteine 87 and histidine 129. The active site involves glutamate 130. Histidine 133 contributes to the Fe cation binding site.

The protein belongs to the polypeptide deformylase family. It depends on Fe(2+) as a cofactor.

The enzyme catalyses N-terminal N-formyl-L-methionyl-[peptide] + H2O = N-terminal L-methionyl-[peptide] + formate. Removes the formyl group from the N-terminal Met of newly synthesized proteins. Requires at least a dipeptide for an efficient rate of reaction. N-terminal L-methionine is a prerequisite for activity but the enzyme has broad specificity at other positions. This is Peptide deformylase from Thermotoga neapolitana (strain ATCC 49049 / DSM 4359 / NBRC 107923 / NS-E).